The sequence spans 96 residues: Nucleoid-associated protein DR_0199 (96 aa).

This sequence belongs to the YbaB/EbfC family. As to quaternary structure, homodimer.

It is found in the cytoplasm. It localises to the nucleoid. Its function is as follows. Binds to DNA and alters its conformation. May be involved in regulation of gene expression, nucleoid organization and DNA protection. The protein is Nucleoid-associated protein DR_0199 of Deinococcus radiodurans (strain ATCC 13939 / DSM 20539 / JCM 16871 / CCUG 27074 / LMG 4051 / NBRC 15346 / NCIMB 9279 / VKM B-1422 / R1).